The chain runs to 281 residues: Protein phosphatase 2C homolog 1 (281 aa).

The PPM-type phosphatase domain maps to 20–281; that stretch reads RVGVAENKNS…DNVTVMVVFL (262 aa). Positions 58, 59, 233, and 272 each coordinate Mn(2+).

Belongs to the PP2C family. Interacts with NBP2 and PBS2. It depends on Mg(2+) as a cofactor. The cofactor is Mn(2+).

Its subcellular location is the peroxisome. It carries out the reaction O-phospho-L-seryl-[protein] + H2O = L-seryl-[protein] + phosphate. The catalysed reaction is O-phospho-L-threonyl-[protein] + H2O = L-threonyl-[protein] + phosphate. In terms of biological role, serine and threonine phosphatase. Involved in tRNA splicing and cell separation. The polypeptide is Protein phosphatase 2C homolog 1 (PTC1) (Saccharomyces cerevisiae (strain ATCC 204508 / S288c) (Baker's yeast)).